The following is a 266-amino-acid chain: Protein PAE0875 (266 aa).

It belongs to the CinA family.

The protein is Protein PAE0875 of Pyrobaculum aerophilum (strain ATCC 51768 / DSM 7523 / JCM 9630 / CIP 104966 / NBRC 100827 / IM2).